Reading from the N-terminus, the 436-residue chain is 3-ketoacyl-CoA thiolase (436 aa).

The Acyl-thioester intermediate role is filled by Cys99. Catalysis depends on proton acceptor residues His392 and Cys422.

The protein belongs to the thiolase-like superfamily. Thiolase family. As to quaternary structure, heterotetramer of two alpha chains (FadJ) and two beta chains (FadI).

The protein resides in the cytoplasm. The enzyme catalyses an acyl-CoA + acetyl-CoA = a 3-oxoacyl-CoA + CoA. It functions in the pathway lipid metabolism; fatty acid beta-oxidation. Its function is as follows. Catalyzes the final step of fatty acid oxidation in which acetyl-CoA is released and the CoA ester of a fatty acid two carbons shorter is formed. The sequence is that of 3-ketoacyl-CoA thiolase from Salmonella choleraesuis (strain SC-B67).